The primary structure comprises 451 residues: POU domain, class 3, transcription factor 1 (451 aa).

5 disordered regions span residues methionine 1 to proline 21, alanine 69 to alanine 114, alanine 127 to glutamine 154, glycine 186 to aspartate 253, and lysine 395 to glutamine 451. Composition is skewed to gly residues over residues glycine 11–glycine 20, threonine 76–alanine 85, and alanine 95–phenylalanine 112. Over residues alanine 190–glutamine 199 the composition is skewed to basic and acidic residues. The span at alanine 220–proline 232 shows a compositional bias: low complexity. In terms of domain architecture, POU-specific spans glutamate 247 to aspartate 321. Residues lysine 339 to threonine 398 constitute a DNA-binding region (homeobox). The span at proline 427 to alanine 436 shows a compositional bias: pro residues.

Belongs to the POU transcription factor family. Class-3 subfamily. In terms of tissue distribution, expressed in embryonal stem cells and in the developing brain.

The protein resides in the nucleus. Its function is as follows. Transcription factor that binds to the octamer motif (5'-ATTTGCAT-3'). Acts as a transcriptional activator when binding cooperatively with SOX4, SOX11, or SOX12 to gene promoters. Acts as a transcriptional repressor of myelin-specific genes. This chain is POU domain, class 3, transcription factor 1 (POU3F1), found in Homo sapiens (Human).